A 120-amino-acid polypeptide reads, in one-letter code: Large ribosomal subunit protein uL18 (120 aa).

Belongs to the universal ribosomal protein uL18 family. As to quaternary structure, part of the 50S ribosomal subunit; part of the 5S rRNA/L5/L18/L25 subcomplex. Contacts the 5S and 23S rRNAs.

Functionally, this is one of the proteins that bind and probably mediate the attachment of the 5S RNA into the large ribosomal subunit, where it forms part of the central protuberance. The chain is Large ribosomal subunit protein uL18 from Gluconacetobacter diazotrophicus (strain ATCC 49037 / DSM 5601 / CCUG 37298 / CIP 103539 / LMG 7603 / PAl5).